Here is a 613-residue protein sequence, read N- to C-terminus: 8-methylmenaquinol:fumarate reductase flavoprotein subunit (613 aa).

Positions 1-33 form a signal peptide, tat-type signal; it reads MSEQFTRREFLQSACITMGALAVSTSGVDRAFA. FAD-binding positions include 53 to 58, 78 to 93, and D255; these read GSGAAG and SKVM…AEGG. Substrate-binding residues include H276 and T288. The active-site Proton acceptor is R319. Residue H387 coordinates substrate. E413 is a binding site for FAD. R424 is a binding site for substrate. 429-430 contacts FAD; that stretch reads SL.

Belongs to the FAD-dependent oxidoreductase 2 family. FRD/SDH subfamily. The MFR complex is composed of three subunits: a flavoprotein (SdhA), an iron-sulfur protein (SdhB), and one hydrophobic anchor protein (SdhE). FAD serves as cofactor. Post-translationally, predicted to be exported by the Tat system. The position of the signal peptide cleavage has not been experimentally proven.

The protein resides in the periplasm. It is found in the cell membrane. It catalyses the reaction 8-methylmenaquinone-6 + succinate = 8-methylmenaquinol-6 + fumarate. Flavoprotein subunit of 8-methylmenaquinol:fumarate reductase (MFR), that catalyzes the reduction of fumarate using 8-methylmenaquinol-6 as electron donor. The complex shows no succinate oxidation activity. Is involved in anaerobic metabolism. SdhA contains the dicarboxylate reduction site. The sequence is that of 8-methylmenaquinol:fumarate reductase flavoprotein subunit from Wolinella succinogenes (strain ATCC 29543 / DSM 1740 / CCUG 13145 / JCM 31913 / LMG 7466 / NCTC 11488 / FDC 602W) (Vibrio succinogenes).